Consider the following 498-residue polypeptide: U4/U6 small nuclear ribonucleoprotein Prp31 (498 aa).

The segment at 1–24 (MSLADELLADLEEAAEEEEENLID) is disordered. Residues 7–24 (LLADLEEAAEEEEENLID) are compositionally biased toward acidic residues. 2 coiled-coil regions span residues 84–119 (EAAPEYKVIVDANNLTVEIENELNIIHKFIRDKYSK) and 180–214 (DEELERIEEACDMALELNQSKHRIYEYVESRMSFI). Residues 214–332 (IAPNLSIIVG…IERKFDKWQE (119 aa)) enclose the Nop domain. The tract at residues 333 to 356 (PPPVKQVKPLPAPLDGQRKKRGGR) is disordered. Positions 350-363 (RKKRGGRRYRKMKE) match the Nuclear localization signal (NLS) motif.

It belongs to the PRP31 family. In terms of assembly, identified in the spliceosome B complex. Component of the U4/U6-U5 tri-snRNP complex. Component of some MLL1/MLL complex.

The protein resides in the nucleus. The protein localises to the nucleus speckle. Its subcellular location is the cajal body. Functionally, involved in pre-mRNA splicing as component of the spliceosome. Required for the assembly of the U4/U5/U6 tri-snRNP complex, one of the building blocks of the spliceosome. This is U4/U6 small nuclear ribonucleoprotein Prp31 (prpf31) from Xenopus laevis (African clawed frog).